Reading from the N-terminus, the 232-residue chain is Ubiquinone biosynthesis O-methyltransferase (232 aa).

S-adenosyl-L-methionine contacts are provided by Arg36, Gly55, Asp76, and Leu120.

The protein belongs to the methyltransferase superfamily. UbiG/COQ3 family.

It carries out the reaction a 3-demethylubiquinol + S-adenosyl-L-methionine = a ubiquinol + S-adenosyl-L-homocysteine + H(+). The enzyme catalyses a 3-(all-trans-polyprenyl)benzene-1,2-diol + S-adenosyl-L-methionine = a 2-methoxy-6-(all-trans-polyprenyl)phenol + S-adenosyl-L-homocysteine + H(+). It participates in cofactor biosynthesis; ubiquinone biosynthesis. Functionally, O-methyltransferase that catalyzes the 2 O-methylation steps in the ubiquinone biosynthetic pathway. This is Ubiquinone biosynthesis O-methyltransferase from Pseudomonas aeruginosa (strain LESB58).